A 174-amino-acid chain; its full sequence is Cell division protein FtsL (174 aa).

Residues 1 to 38 are Cytoplasmic-facing; sequence MLAAPRELSYIPQPVVSSKQSPRSGLSNRRRESRARQK. Residues 39–59 form a helical membrane-spanning segment; sequence ILLLGLVLMGFVIGLSLTFLT. Residues 60-174 are Extracellular-facing; sequence MQVLIKGYKI…EPARQAGAGV (115 aa).

The protein belongs to the FtsL family.

The protein localises to the cell membrane. In terms of biological role, essential cell division protein. The protein is Cell division protein FtsL of Moorella thermoacetica (strain ATCC 39073 / JCM 9320).